A 229-amino-acid chain; its full sequence is Deoxyribose-phosphate aldolase (229 aa).

The active-site Proton donor/acceptor is D96. Catalysis depends on K166, which acts as the Schiff-base intermediate with acetaldehyde. Catalysis depends on K195, which acts as the Proton donor/acceptor.

This sequence belongs to the DeoC/FbaB aldolase family. DeoC type 1 subfamily.

Its subcellular location is the cytoplasm. The catalysed reaction is 2-deoxy-D-ribose 5-phosphate = D-glyceraldehyde 3-phosphate + acetaldehyde. It functions in the pathway carbohydrate degradation; 2-deoxy-D-ribose 1-phosphate degradation; D-glyceraldehyde 3-phosphate and acetaldehyde from 2-deoxy-alpha-D-ribose 1-phosphate: step 2/2. In terms of biological role, catalyzes a reversible aldol reaction between acetaldehyde and D-glyceraldehyde 3-phosphate to generate 2-deoxy-D-ribose 5-phosphate. The sequence is that of Deoxyribose-phosphate aldolase from Micrococcus luteus (strain ATCC 4698 / DSM 20030 / JCM 1464 / CCM 169 / CCUG 5858 / IAM 1056 / NBRC 3333 / NCIMB 9278 / NCTC 2665 / VKM Ac-2230) (Micrococcus lysodeikticus).